A 425-amino-acid chain; its full sequence is Probable threonylcarbamoyladenosine tRNA methylthiotransferase (425 aa).

One can recognise an MTTase N-terminal domain in the interval 2-110; it reads VKIYIENYGC…IIQAVEYALR (109 aa). [4Fe-4S] cluster contacts are provided by Cys-11, Cys-47, Cys-76, Cys-148, Cys-152, and Cys-155. Residues 133–363 form the Radical SAM core domain; that stretch reads LSPRTVYFIV…HRIRLQISYE (231 aa). In terms of domain architecture, TRAM spans 366–425; that stretch reads QKYIGKKVEVLIHGEGKKGNVDAVTMNYKHVILPFGNSGEFRIAEIKNATSTYLLGEVMS.

Belongs to the methylthiotransferase family. CDKAL1 subfamily. Requires [4Fe-4S] cluster as cofactor.

It catalyses the reaction N(6)-L-threonylcarbamoyladenosine(37) in tRNA + (sulfur carrier)-SH + AH2 + 2 S-adenosyl-L-methionine = 2-methylsulfanyl-N(6)-L-threonylcarbamoyladenosine(37) in tRNA + (sulfur carrier)-H + 5'-deoxyadenosine + L-methionine + A + S-adenosyl-L-homocysteine + 2 H(+). Catalyzes the methylthiolation of N6-threonylcarbamoyladenosine (t(6)A), leading to the formation of 2-methylthio-N6-threonylcarbamoyladenosine (ms(2)t(6)A) at position 37 in tRNAs that read codons beginning with adenine. The polypeptide is Probable threonylcarbamoyladenosine tRNA methylthiotransferase (Pyrococcus abyssi (strain GE5 / Orsay)).